A 131-amino-acid polypeptide reads, in one-letter code: MRHGNGLRKLNRTSSHRLAMFRNMAVSLITHEAIKTTLPKAKELRRVVEPLITLGKEPTLANKRLAFARLRDRAAVVKLFAEIGPRYAARNGGYTRVLKMGFRQGDNAPMAYMELVDRPEVEETEADNAAE.

Belongs to the bacterial ribosomal protein bL17 family. Part of the 50S ribosomal subunit. Contacts protein L32.

This chain is Large ribosomal subunit protein bL17, found in Bordetella petrii (strain ATCC BAA-461 / DSM 12804 / CCUG 43448).